The following is a 297-amino-acid chain: Protoheme IX farnesyltransferase (297 aa).

9 helical membrane-spanning segments follow: residues 16 to 36 (VVALIVFTALVGMVLAIPGVP), 45 to 65 (VLGFLGIWLAASAAAAINQLL), 93 to 113 (VFASVLIVLSMVILVLWVNLI), 114 to 134 (TAVLTFASLIGYAVIYTVYLK), 141 to 161 (IVIGGLAGAMPPMLGWAAVTG), 172 to 192 (SLLVLIIFIWTPPHFWALAIF), 223 to 243 (VVLALVCLLPYLVGMSGAFYL), 244 to 264 (GGAIVLNAVFLWYAWRMLDPP), and 277 to 297 (IVYLMALFAFLLVDHWILPWL).

This sequence belongs to the UbiA prenyltransferase family. Protoheme IX farnesyltransferase subfamily.

The protein localises to the cell inner membrane. It catalyses the reaction heme b + (2E,6E)-farnesyl diphosphate + H2O = Fe(II)-heme o + diphosphate. Its pathway is porphyrin-containing compound metabolism; heme O biosynthesis; heme O from protoheme: step 1/1. Converts heme B (protoheme IX) to heme O by substitution of the vinyl group on carbon 2 of heme B porphyrin ring with a hydroxyethyl farnesyl side group. The chain is Protoheme IX farnesyltransferase from Stenotrophomonas maltophilia (strain R551-3).